Here is a 94-residue protein sequence, read N- to C-terminus: Probable Fe(2+)-trafficking protein (94 aa).

This sequence belongs to the Fe(2+)-trafficking protein family.

Functionally, could be a mediator in iron transactions between iron acquisition and iron-requiring processes, such as synthesis and/or repair of Fe-S clusters in biosynthetic enzymes. In Alcanivorax borkumensis (strain ATCC 700651 / DSM 11573 / NCIMB 13689 / SK2), this protein is Probable Fe(2+)-trafficking protein.